Consider the following 132-residue polypeptide: Small ribosomal subunit protein uS8 (132 aa).

This sequence belongs to the universal ribosomal protein uS8 family. In terms of assembly, part of the 30S ribosomal subunit. Contacts proteins S5 and S12.

In terms of biological role, one of the primary rRNA binding proteins, it binds directly to 16S rRNA central domain where it helps coordinate assembly of the platform of the 30S subunit. The sequence is that of Small ribosomal subunit protein uS8 from Anaeromyxobacter sp. (strain Fw109-5).